The following is a 97-amino-acid chain: Acylphosphatase (97 aa).

One can recognise an Acylphosphatase-like domain in the interval 11 to 97; that stretch reads TYYVRVRGTV…EKRYERFEQH (87 aa). Catalysis depends on residues Arg26 and Asn44. Residues 76-97 are disordered; sequence RVTEVSGEERSTEKRYERFEQH. Residues 82–97 show a composition bias toward basic and acidic residues; sequence GEERSTEKRYERFEQH.

It belongs to the acylphosphatase family.

It carries out the reaction an acyl phosphate + H2O = a carboxylate + phosphate + H(+). The polypeptide is Acylphosphatase (acyP) (Paraburkholderia xenovorans (strain LB400)).